Here is a 222-residue protein sequence, read N- to C-terminus: Orotate phosphoribosyltransferase (222 aa).

Lysine 29 lines the 5-phospho-alpha-D-ribose 1-diphosphate pocket. An orotate-binding site is contributed by 37 to 38 (FF). Residues 75–76 (YK), arginine 101, lysine 102, lysine 105, histidine 107, and 126–134 (DDVISAGTS) contribute to the 5-phospho-alpha-D-ribose 1-diphosphate site. Orotate contacts are provided by serine 130 and arginine 158.

This sequence belongs to the purine/pyrimidine phosphoribosyltransferase family. PyrE subfamily. As to quaternary structure, homodimer. Mg(2+) is required as a cofactor.

It catalyses the reaction orotidine 5'-phosphate + diphosphate = orotate + 5-phospho-alpha-D-ribose 1-diphosphate. Its pathway is pyrimidine metabolism; UMP biosynthesis via de novo pathway; UMP from orotate: step 1/2. Functionally, catalyzes the transfer of a ribosyl phosphate group from 5-phosphoribose 1-diphosphate to orotate, leading to the formation of orotidine monophosphate (OMP). In Polynucleobacter necessarius subsp. necessarius (strain STIR1), this protein is Orotate phosphoribosyltransferase.